We begin with the raw amino-acid sequence, 290 residues long: Light-independent protochlorophyllide reductase iron-sulfur ATP-binding protein (290 aa).

ATP-binding positions include 10–15 (GIGKST) and Lys-39. Mg(2+) is bound at residue Ser-14. [4Fe-4S] cluster-binding residues include Cys-95 and Cys-129. 180–181 (NR) contributes to the ATP binding site.

This sequence belongs to the NifH/BchL/ChlL family. Homodimer. Protochlorophyllide reductase is composed of three subunits; ChlL, ChlN and ChlB. Requires [4Fe-4S] cluster as cofactor.

Its subcellular location is the plastid. It localises to the chloroplast. The enzyme catalyses chlorophyllide a + oxidized 2[4Fe-4S]-[ferredoxin] + 2 ADP + 2 phosphate = protochlorophyllide a + reduced 2[4Fe-4S]-[ferredoxin] + 2 ATP + 2 H2O. The protein operates within porphyrin-containing compound metabolism; chlorophyll biosynthesis (light-independent). In terms of biological role, component of the dark-operative protochlorophyllide reductase (DPOR) that uses Mg-ATP and reduced ferredoxin to reduce ring D of protochlorophyllide (Pchlide) to form chlorophyllide a (Chlide). This reaction is light-independent. The L component serves as a unique electron donor to the NB-component of the complex, and binds Mg-ATP. The polypeptide is Light-independent protochlorophyllide reductase iron-sulfur ATP-binding protein (Porphyra purpurea (Red seaweed)).